The primary structure comprises 35 residues: Non-specific lipid-transfer protein 1 (35 aa).

Cysteine 13 and cysteine 28 are joined by a disulfide.

As to expression, seeds.

Plant non-specific lipid-transfer proteins transfer phospholipids as well as galactolipids across membranes. May play a role in wax or cutin deposition in the cell walls of expanding epidermal cells and certain secretory tissues. Inhibits the growth of F.oxysporum and P.infestans. The protein is Non-specific lipid-transfer protein 1 of Nigella sativa (Black cumin).